The sequence spans 417 residues: UDP-N-acetylglucosamine 1-carboxyvinyltransferase (417 aa).

Residue 22–23 (KN) coordinates phosphoenolpyruvate. Arginine 92 lines the UDP-N-acetyl-alpha-D-glucosamine pocket. Cysteine 116 functions as the Proton donor in the catalytic mechanism. Cysteine 116 bears the 2-(S-cysteinyl)pyruvic acid O-phosphothioketal mark. Aspartate 304 and isoleucine 326 together coordinate UDP-N-acetyl-alpha-D-glucosamine.

The protein belongs to the EPSP synthase family. MurA subfamily.

The protein resides in the cytoplasm. It carries out the reaction phosphoenolpyruvate + UDP-N-acetyl-alpha-D-glucosamine = UDP-N-acetyl-3-O-(1-carboxyvinyl)-alpha-D-glucosamine + phosphate. The protein operates within cell wall biogenesis; peptidoglycan biosynthesis. Cell wall formation. Adds enolpyruvyl to UDP-N-acetylglucosamine. The chain is UDP-N-acetylglucosamine 1-carboxyvinyltransferase from Desulforapulum autotrophicum (strain ATCC 43914 / DSM 3382 / VKM B-1955 / HRM2) (Desulfobacterium autotrophicum).